Here is a 729-residue protein sequence, read N- to C-terminus: Catalase-peroxidase (729 aa).

Residues 1–26 (MTMDQKTDNAGKCPVAHTAPRGRSNR) are disordered. Residues 97-219 (WHSAGTYRIT…LAAVQMGLIY (123 aa)) constitute a cross-link (tryptophyl-tyrosyl-methioninium (Trp-Tyr) (with M-245)). H98 functions as the Proton acceptor in the catalytic mechanism. The tryptophyl-tyrosyl-methioninium (Tyr-Met) (with W-97) cross-link spans 219 to 245 (YVNPEGPNGNPDPVAAAHDIRETFARM). Residue H260 participates in heme b binding.

It belongs to the peroxidase family. Peroxidase/catalase subfamily. As to quaternary structure, homodimer or homotetramer. Heme b serves as cofactor. Post-translationally, formation of the three residue Trp-Tyr-Met cross-link is important for the catalase, but not the peroxidase activity of the enzyme.

It carries out the reaction H2O2 + AH2 = A + 2 H2O. It catalyses the reaction 2 H2O2 = O2 + 2 H2O. Functionally, bifunctional enzyme with both catalase and broad-spectrum peroxidase activity. This is Catalase-peroxidase from Sinorhizobium medicae (strain WSM419) (Ensifer medicae).